A 258-amino-acid chain; its full sequence is 4-hydroxy-2-oxovalerate aldolase (258 aa).

The Proton acceptor role is filled by His48. A substrate-binding site is contributed by Gln149. Glu151 is a Mg(2+) binding site. Positions 176 and 177 each coordinate substrate. Asp177 is a Mg(2+) binding site.

This sequence belongs to the HpcH/HpaI aldolase family.

It catalyses the reaction (S)-4-hydroxy-2-oxopentanoate = acetaldehyde + pyruvate. Its pathway is xenobiotic degradation; biphenyl degradation. Its function is as follows. Catalyzes the reversible retro-aldol cleavage of 4-hydroxy-2-oxovalerate to pyruvate and acetaldehyde. This is 4-hydroxy-2-oxovalerate aldolase (bphF) from Rhodococcus jostii (strain RHA1).